The primary structure comprises 78 residues: UPF0235 protein AF_2072 (78 aa).

This sequence belongs to the UPF0235 family.

The chain is UPF0235 protein AF_2072 from Archaeoglobus fulgidus (strain ATCC 49558 / DSM 4304 / JCM 9628 / NBRC 100126 / VC-16).